The following is a 206-amino-acid chain: Uridine kinase (206 aa).

9-16 (GGSGSGKT) contacts ATP.

Belongs to the uridine kinase family.

It localises to the cytoplasm. It catalyses the reaction uridine + ATP = UMP + ADP + H(+). The catalysed reaction is cytidine + ATP = CMP + ADP + H(+). It participates in pyrimidine metabolism; CTP biosynthesis via salvage pathway; CTP from cytidine: step 1/3. The protein operates within pyrimidine metabolism; UMP biosynthesis via salvage pathway; UMP from uridine: step 1/1. The protein is Uridine kinase of Borrelia hermsii (strain HS1 / DAH).